Reading from the N-terminus, the 610-residue chain is Elongation factor 4 (610 aa).

The region spanning 11 to 193 (ENIRNFSIIA…QIVEKVPAPS (183 aa)) is the tr-type G domain. GTP is bound by residues 23 to 28 (DHGKST) and 140 to 143 (NKID).

It belongs to the TRAFAC class translation factor GTPase superfamily. Classic translation factor GTPase family. LepA subfamily.

Its subcellular location is the cell membrane. The enzyme catalyses GTP + H2O = GDP + phosphate + H(+). Its function is as follows. Required for accurate and efficient protein synthesis under certain stress conditions. May act as a fidelity factor of the translation reaction, by catalyzing a one-codon backward translocation of tRNAs on improperly translocated ribosomes. Back-translocation proceeds from a post-translocation (POST) complex to a pre-translocation (PRE) complex, thus giving elongation factor G a second chance to translocate the tRNAs correctly. Binds to ribosomes in a GTP-dependent manner. This is Elongation factor 4 from Streptococcus equi subsp. zooepidemicus (strain H70).